The sequence spans 79 residues: MKTIMIRDDVYKKLLEIKGDKSFSEIIEELIEESLSVRRKKIEKYFGILNEEEARGLAKEIEEMRKRTDEDIARKLSNY.

It belongs to the UPF0330 family.

Its function is as follows. Possibly the antitoxin component of a type II toxin-antitoxin (TA) system. Its cognate toxin is VapC12 (Potential). The sequence is that of Putative antitoxin VapB12 (vapB12) from Sulfurisphaera tokodaii (strain DSM 16993 / JCM 10545 / NBRC 100140 / 7) (Sulfolobus tokodaii).